The following is a 714-amino-acid chain: MEMASAFTLNVRLDNIAVITIDVPGEKMNTLKAEFASQVRAIIKQLRENKDLRGVVFISAKPDNFIAGADINMIANCKTAQEAEALARQGQQLMAEIHALPVPVIAAIHGACLGGGLELALACHGRVCTDDPKTVLGLPEVQLGLLPGSGGTQRLPRLIGVSTALEMILTGKQLRAKQALKLGLVDDVVPHSILLEAAVELAKQDRPSSRPLPVRERILAGPLGRALLFKMVGKKTEQKTQGNYPATKRILDVIETGLAQGTSSGYDAEARAFGELAMTPQSQALRNIFFASTEVKKDPGSDAPPAPLNSVGILGGGLMGGGIAYVTACKAGLPVRIKDINPQGINHALKYSWDQLEGKVRRRHLKASERDKQLALISGTTDYRGFAHRDLIIEAVFENLELKQQMVAEVEQNCAAHTIFASNTSSLPIADIAAHAARPEQVIGLHFFSPVEKMPLVEIIPHAGTSAQTIATTVKLAKKQGKTPIVVRDKAGFYVNRILAPYINEAIRMLTEGERVEHIDAALVKFGFPVGPIQLLDEVGIDTGTKIIPVLEAAYGERFSAPANVVSSILNDDRKGRKNGRGFYLYGQKGRKSKKQVDPAIYPLIGAQGQGRLSAPQVAERCVMLMLNEAVRCLDEQVIRSVRDGDIGAVFGIGFPPFLGGPFRYIDSLGAGEVVAIMQRLATQYGSRFTPCERLVEMSKRGESFWKTTATDLQ.

The segment at 1–190 (MEMASAFTLN…KLGLVDDVVP (190 aa)) is enoyl-CoA hydratase. The interval 306–714 (APLNSVGILG…FWKTTATDLQ (409 aa)) is 3-hydroxyacyl-CoA dehydrogenase.

The protein in the N-terminal section; belongs to the enoyl-CoA hydratase/isomerase family. This sequence in the central section; belongs to the 3-hydroxyacyl-CoA dehydrogenase family. As to quaternary structure, heterotetramer of two alpha chains (FadJ) and two beta chains (FadI).

The protein localises to the cytoplasm. It carries out the reaction a (3S)-3-hydroxyacyl-CoA = a (2E)-enoyl-CoA + H2O. The enzyme catalyses a 4-saturated-(3S)-3-hydroxyacyl-CoA = a (3E)-enoyl-CoA + H2O. The catalysed reaction is a (3S)-3-hydroxyacyl-CoA + NAD(+) = a 3-oxoacyl-CoA + NADH + H(+). It catalyses the reaction (3S)-3-hydroxybutanoyl-CoA = (3R)-3-hydroxybutanoyl-CoA. It functions in the pathway lipid metabolism; fatty acid beta-oxidation. Functionally, catalyzes the formation of a hydroxyacyl-CoA by addition of water on enoyl-CoA. Also exhibits 3-hydroxyacyl-CoA epimerase and 3-hydroxyacyl-CoA dehydrogenase activities. The polypeptide is Fatty acid oxidation complex subunit alpha (Escherichia coli O6:H1 (strain CFT073 / ATCC 700928 / UPEC)).